Consider the following 362-residue polypeptide: MNTPLKPKHGQKTNRKPKANKPVVKKQQTKQPPTHKVQGEEVAAVKSGLHPRNRHRGQYDFPALIKVVPELQSHVMKNPKGQWTINFADPISVKLLNKALLVLHYGVTYWDIPEGFLCPPIPGRADYIHRVADLLLKGNPQLNHSQVRALDIGVGANCIYPIVGVTEYGWSWVGSDVDPVSIQQASLIVQSNSKLQGHIECRLQKNSQHIFNGIIGANERYTVTTCNPPFHASLADAQQGTQRKLTNLQANQRKKGRLATPTLSHSRLNFGGQKAELWCPGGEAAFIGKMAVESQQFAQQVLWFSTLISKGDNVRGMKKQLEKLGAQSIHVIEMAQGQKISRFIAWSFQNAEQRKLWWQAKC.

Residues 1 to 28 are compositionally biased toward basic residues; that stretch reads MNTPLKPKHGQKTNRKPKANKPVVKKQQ. The segment at 1-40 is disordered; the sequence is MNTPLKPKHGQKTNRKPKANKPVVKKQQTKQPPTHKVQGE.

Belongs to the methyltransferase superfamily. METTL16/RlmF family.

Its subcellular location is the cytoplasm. The catalysed reaction is adenosine(1618) in 23S rRNA + S-adenosyl-L-methionine = N(6)-methyladenosine(1618) in 23S rRNA + S-adenosyl-L-homocysteine + H(+). Functionally, specifically methylates the adenine in position 1618 of 23S rRNA. The sequence is that of Ribosomal RNA large subunit methyltransferase F from Vibrio cholerae serotype O1 (strain M66-2).